A 249-amino-acid chain; its full sequence is BPI fold-containing family A member 2 (249 aa).

The N-terminal stretch at 1–18 is a signal peptide; it reads MLQLWKLVLLCGVLTGTS. Residues N124 and N132 are each glycosylated (N-linked (GlcNAc...) asparagine). A disulfide bridge links C174 with C217.

Belongs to the BPI/LBP/Plunc superfamily. Plunc family. Detected in submandibular gland. Secreted into saliva.

The protein resides in the secreted. In terms of biological role, has strong antibacterial activity against P.aeruginosa. This Homo sapiens (Human) protein is BPI fold-containing family A member 2 (BPIFA2).